The following is a 94-amino-acid chain: Phosphoribosyl-ATP pyrophosphatase (94 aa).

It belongs to the PRA-PH family.

The protein localises to the cytoplasm. It catalyses the reaction 1-(5-phospho-beta-D-ribosyl)-ATP + H2O = 1-(5-phospho-beta-D-ribosyl)-5'-AMP + diphosphate + H(+). The protein operates within amino-acid biosynthesis; L-histidine biosynthesis; L-histidine from 5-phospho-alpha-D-ribose 1-diphosphate: step 2/9. The chain is Phosphoribosyl-ATP pyrophosphatase from Pyrobaculum islandicum (strain DSM 4184 / JCM 9189 / GEO3).